A 309-amino-acid chain; its full sequence is MTIGKILLYYCFTPIEDPTAIMLWQRSLCEKLGLKGRILISEHGINGTVGGDMDACKRYVRETREYPGFKKMEFKWSEGGAEDFPRLSVKVRDEIVAFGAPGELKVDENGVIGGGVHLKPEEVNKLVEERGEEVVFFDGRNAMEAEIGKFKNAVVPDVRTTHDFIAELESGKYDWMKDKPVVSYCTGGIRCEILSALMKNRGFNEVYQIDGGIVRYGEKYGNDGLWEGSMYVFDKRMHHEFGQGLEDPGFIQLGHCVHCGKGTNTFHNCINEDTCRKQVLICDDCIQHVETQHCGRPDCAEVAASQAQA.

A Rhodanese domain is found at 130–225 (RGEEVVFFDG…YGEKYGNDGL (96 aa)). Cys-185 acts as the Cysteine persulfide intermediate in catalysis.

The protein belongs to the TrhO family.

It carries out the reaction uridine(34) in tRNA + AH2 + O2 = 5-hydroxyuridine(34) in tRNA + A + H2O. In terms of biological role, catalyzes oxygen-dependent 5-hydroxyuridine (ho5U) modification at position 34 in tRNAs. This Corynebacterium aurimucosum (strain ATCC 700975 / DSM 44827 / CIP 107346 / CN-1) (Corynebacterium nigricans) protein is tRNA uridine(34) hydroxylase.